We begin with the raw amino-acid sequence, 776 residues long: Isoamylase (776 aa).

A signal peptide spans 1–26 (MKCPKILAALLGCAVLAGVPAMPAHA). Residues aspartate 154, glutamate 255, threonine 256, asparagine 258, and aspartate 285 each coordinate Ca(2+). Residue aspartate 401 is the Nucleophile of the active site. A disulfide bridge connects residues cysteine 410 and cysteine 422. Glutamate 461 functions as the Proton donor in the catalytic mechanism. Cystine bridges form between cysteine 546–cysteine 616 and cysteine 738–cysteine 766.

This sequence belongs to the glycosyl hydrolase 13 family. As to quaternary structure, monomer. The cofactor is Ca(2+).

The catalysed reaction is Hydrolysis of (1-&gt;6)-alpha-D-glucosidic branch linkages in glycogen, amylopectin and their beta-limit dextrins.. The polypeptide is Isoamylase (iam) (Pseudomonas sp. (strain SMP1)).